Consider the following 102-residue polypeptide: U3-aranetoxin-Ce1a (102 aa).

The signal sequence occupies residues 1-21 (MKHLSIFFVFFCCICVMLCDA).

Belongs to the neurotoxin 20 family. As to expression, expressed by the venom gland.

It localises to the secreted. The protein is U3-aranetoxin-Ce1a of Caerostris extrusa (Bark spider).